The chain runs to 1071 residues: ATP-dependent helicase/deoxyribonuclease subunit B (1071 aa).

Belongs to the helicase family. AddB/RexB type 2 subfamily. As to quaternary structure, heterodimer of AddA and RexB. It depends on Mg(2+) as a cofactor.

The heterodimer acts as both an ATP-dependent DNA helicase and an ATP-dependent, dual-direction single-stranded exonuclease. Recognizes the chi site generating a DNA molecule suitable for the initiation of homologous recombination. This subunit has 5' -&gt; 3' nuclease activity but not helicase activity. This Streptococcus pyogenes serotype M6 (strain ATCC BAA-946 / MGAS10394) protein is ATP-dependent helicase/deoxyribonuclease subunit B.